The primary structure comprises 323 residues: UDP-N-acetylenolpyruvoylglucosamine reductase (323 aa).

An FAD-binding PCMH-type domain is found at 52-217 (KSGGAADWLF…VSARLQGEPG (166 aa)). Residue Arg197 is part of the active site. The disordered stretch occupies residues 234 to 253 (EQSQPVRTKTGGSTFKNPPG). A compositionally biased stretch (polar residues) spans 235 to 249 (QSQPVRTKTGGSTFK). The active-site Proton donor is Ser246. The active site involves Glu316.

It belongs to the MurB family. FAD serves as cofactor.

The protein localises to the cytoplasm. It carries out the reaction UDP-N-acetyl-alpha-D-muramate + NADP(+) = UDP-N-acetyl-3-O-(1-carboxyvinyl)-alpha-D-glucosamine + NADPH + H(+). The protein operates within cell wall biogenesis; peptidoglycan biosynthesis. Functionally, cell wall formation. The sequence is that of UDP-N-acetylenolpyruvoylglucosamine reductase from Erythrobacter litoralis (strain HTCC2594).